We begin with the raw amino-acid sequence, 265 residues long: Small ribosomal subunit protein uS2 (265 aa).

The segment at 226–265 is disordered; it reads AAAPNSASVREEEFSADAADEGKGRRAPAKKGDKKADAAE. Basic and acidic residues predominate over residues 245 to 265; that stretch reads DEGKGRRAPAKKGDKKADAAE.

This sequence belongs to the universal ribosomal protein uS2 family.

The protein is Small ribosomal subunit protein uS2 of Xanthomonas axonopodis pv. citri (strain 306).